The sequence spans 374 residues: D-amino-acid oxidase 3 (374 aa).

Positions methionine 1–alanine 19 are cleaved as a signal peptide. FAD is bound by residues serine 11, leucine 14, lysine 34, aspartate 35, alanine 46, serine 47, and glycine 51. Asparagine 180 carries N-linked (GlcNAc...) asparagine glycosylation. Cysteines 214 and 271 form a disulfide. Positions 229, 246, and 296 each coordinate (R)-lactate. Residues tyrosine 229, tyrosine 246, and arginine 296 each coordinate anthranilate. FAD-binding residues include arginine 296, glycine 342, glycine 345, tyrosine 346, and glutamine 347. Residues alanine 372–leucine 374 carry the Microbody targeting signal motif.

Belongs to the DAMOX/DASOX family. Requires FAD as cofactor.

The protein localises to the peroxisome matrix. It carries out the reaction a D-alpha-amino acid + O2 + H2O = a 2-oxocarboxylate + H2O2 + NH4(+). Catalyzes the oxidative deamination of D-amino acids with broad substrate specificity. Enables the organism to utilize D-amino acids as a source of nutrients. Enables the organism to utilize D-asparate and D-glutamate as a nitrogen source and may also contribute to utlization of D-tryptophan, D-tyrosine and D-asparagine as a nitrogen source. Protects the organism from the toxicity of D-amino acids, including from D-glutamate. May play a role in its interaction with the host. In Cryptococcus deuterogattii (strain R265) (Cryptococcus gattii VGII (strain R265)), this protein is D-amino-acid oxidase 3.